The primary structure comprises 452 residues: MTAEQAINEGAFSLAASFGFVPLEYRGYEAEVLASKETAYIGTALNGAMSPIYDVTGPDALEFLRSVCINSFRGFQVGQIRHAVLCNDKGQILTDGVVARIDEDTYRTYWLAPALEYRLINSGLDVKGEDQSSNEFFFQLAGPRSLEVLEAAAHEDLHDIAFGRHRMSTIAGIPVRILRLGMAGGLAYEVHGAAADTETAYRAIWEAGQPFGLVKQGLNAYLMQHTEAGFPNINLHYPLPWYEDPDMAAFFDTRPTQNFYNKYRFFYGSVGPDAEARFVTPYQIGLGKMVDFNHDFIGKEALQREAEADHWAAVTLVWNEDDVADVVASKYRGRDVEPYDKIDDRPFDIYHNLGQPGFAYHADWVLADGERIGTSTGRINSVYYRRMISLGFIDKRHAAEGTELTVLWGRPGTPQKEIRVTVGRYPYFDLEKNNAIDVASIPRPALDVSAGA.

The protein belongs to the GcvT family. As to quaternary structure, homotrimer.

The enzyme catalyses (+)-sesamin + (6S)-5,6,7,8-tetrahydrofolyl-(gamma-L-Glu)(n) = (+)-sesamin monocatechol + (6R)-5,10-methylenetetrahydrofolyl-(gamma-L-Glu)(n). It catalyses the reaction (+)-sesamin monocatechol + (6S)-5,6,7,8-tetrahydrofolyl-(gamma-L-Glu)(n) = (+)-sesamin dicatechol + (6R)-5,10-methylenetetrahydrofolyl-(gamma-L-Glu)(n). Its function is as follows. Converts sesamin into sesamin mono- and di-catechol. Catalyzes a ring cleavage to transfer the methylene group to tetrahydrofolate (THF). Also active with (+)-episesamin, (-)-asarinin, sesaminol, (+)-sesamolin and piperine. The sequence is that of Sesamin methylene transferase from Sinomonas sp. (strain No.22).